A 211-amino-acid polypeptide reads, in one-letter code: tRNA (guanosine(18)-2'-O)-methyltransferase (211 aa).

Threonine 103, isoleucine 146, and leucine 155 together coordinate S-adenosyl-L-methionine.

The protein belongs to the class IV-like SAM-binding methyltransferase superfamily. RNA methyltransferase TrmH family. As to quaternary structure, homodimer.

The catalysed reaction is guanosine(18) in tRNA + S-adenosyl-L-methionine = 2'-O-methylguanosine(18) in tRNA + S-adenosyl-L-homocysteine + H(+). In terms of biological role, catalyzes the 2'-O methylation of guanosine at position 18 in tRNA. Type II methylase, which methylates only a subset of tRNA species. The polypeptide is tRNA (guanosine(18)-2'-O)-methyltransferase (Aquifex aeolicus (strain VF5)).